Reading from the N-terminus, the 257-residue chain is Methylthioribulose-1-phosphate dehydratase (257 aa).

C107 is a substrate binding site. Residues H125 and H127 each coordinate Zn(2+). The active-site Proton donor/acceptor is E148. H210 is a Zn(2+) binding site.

It belongs to the aldolase class II family. MtnB subfamily. The cofactor is Zn(2+).

Its subcellular location is the cytoplasm. It catalyses the reaction 5-(methylsulfanyl)-D-ribulose 1-phosphate = 5-methylsulfanyl-2,3-dioxopentyl phosphate + H2O. Its pathway is amino-acid biosynthesis; L-methionine biosynthesis via salvage pathway; L-methionine from S-methyl-5-thio-alpha-D-ribose 1-phosphate: step 2/6. Functionally, catalyzes the dehydration of methylthioribulose-1-phosphate (MTRu-1-P) into 2,3-diketo-5-methylthiopentyl-1-phosphate (DK-MTP-1-P). This chain is Methylthioribulose-1-phosphate dehydratase, found in Lachancea thermotolerans (strain ATCC 56472 / CBS 6340 / NRRL Y-8284) (Yeast).